The primary structure comprises 218 residues: N-(5'-phosphoribosyl)anthranilate isomerase (218 aa).

Belongs to the TrpF family.

It catalyses the reaction N-(5-phospho-beta-D-ribosyl)anthranilate = 1-(2-carboxyphenylamino)-1-deoxy-D-ribulose 5-phosphate. Its pathway is amino-acid biosynthesis; L-tryptophan biosynthesis; L-tryptophan from chorismate: step 3/5. This chain is N-(5'-phosphoribosyl)anthranilate isomerase, found in Stenotrophomonas maltophilia (strain R551-3).